We begin with the raw amino-acid sequence, 303 residues long: Protein SULFUR DEFICIENCY-INDUCED 2 (303 aa).

Residues 62–89 (RVDSALKDMALLMKQQNRAEEAIDAIQS) adopt a coiled-coil conformation. TPR repeat units lie at residues 64–97 (DSAL…CSRQ), 100–133 (ESLD…IYQG), 160–193 (SRIL…EPDA), and 195–226 (KACN…ENKE). A coiled-coil region spans residues 232–253 (RLMARVQELLSELKPQEEEAAA).

It belongs to the MS5 protein family.

It is found in the nucleus. Functionally, involved in the utilization of stored sulfate under sulfur-deficient conditions. This is Protein SULFUR DEFICIENCY-INDUCED 2 from Arabidopsis thaliana (Mouse-ear cress).